Here is a 2271-residue protein sequence, read N- to C-terminus: Serine-rich adhesin for platelets (2271 aa).

The first 89 residues, 1-89 (MSKRQKAFHD…VNMLHDQQAF (89 aa)), serve as a signal peptide directing secretion. Positions 90-230 (AASDAPLTSE…KTSTTSTSTA (141 aa)) are serine-rich repeat region 1, SRR1. Residues 100–111 (LNTQSETVGNQN) are compositionally biased toward polar residues. Disordered regions lie at residues 100 to 229 (LNTQ…STST), 751 to 791 (NSMS…VVST), and 806 to 2243 (SVSA…GLLG). The span at 112 to 128 (STTIEASTSTADSTSVT) shows a compositional bias: low complexity. Positions 129–140 (KNSSSVQTSNSD) are enriched in polar residues. Residues 150-229 (VTSTTNSTSN…NKTSTTSTST (80 aa)) show a composition bias toward low complexity. A non-repeat region (NRR) region spans residues 231–751 (PVKLRTFSRL…TTFKYEVTRN (521 aa)). Composition is skewed to low complexity over residues 752-791 (SMSD…VVST), 806-1392 (SVSA…LSLS), and 1402-2214 (SNSA…ATSE). Residues 752–2232 (SMSDSVSTSG…AQSEKRLPDT (1481 aa)) are serine-rich repeat region 2, SRR2. Residues 2229–2233 (LPDTG) carry the LPXTG sorting signal motif. Pentaglycyl murein peptidoglycan amidated threonine is present on Thr2232. Positions 2233–2271 (GDSIKQNGLLGGVMTLLVGLGLMKRKKKKDENDQDDSQA) are cleaved as a propeptide — removed by sortase.

The protein belongs to the serine-rich repeat protein (SRRP) family. In terms of processing, proteolytically cleaved by a metalloprotease. Glycosylated. It is probable that most of the Ser residues in SSR1 and SSR2 are O-GlcNAcylated. Sequential glycosylation by sugar transferases are able to generate complex sugar polymorphisms.

The protein localises to the secreted. The protein resides in the cell wall. Functionally, mediates binding to human platelets, possibly through a receptor-ligand interaction. Probably associated with virulence in endovascular infection. The polypeptide is Serine-rich adhesin for platelets (sraP) (Staphylococcus aureus (strain USA300)).